The chain runs to 410 residues: Sprouty-related, EVH1 domain-containing protein 3 (410 aa).

The WH1 domain maps to methionine 1–leucine 113. Positions serine 117–alanine 210 are disordered. Composition is skewed to low complexity over residues proline 120–serine 130 and aspartate 147–proline 165. A KBD domain is found at leucine 195–threonine 244. Arginine 240 carries the post-translational modification Asymmetric dimethylarginine. Arginine 248 carries the post-translational modification Omega-N-methylarginine. Residues leucine 258–serine 288 are disordered. Residues proline 267–serine 281 are compositionally biased toward pro residues. Residues arginine 296–glutamate 407 form the SPR domain.

In terms of assembly, interacts with palmitoyltransferase ZDHHC17/HIP14; the interaction leads to palmitoylation of SPRED3. In terms of processing, phosphorylated on tyrosine. Palmitoylated by ZDHHC17/HIP14. Post-translationally, ubiquitinated.

It is found in the cell membrane. Tyrosine kinase substrate that inhibits growth-factor-mediated activation of MAP kinase. Inhibits fibroblast growth factor (FGF)-induced retinal lens fiber differentiation, probably by inhibiting FGF-mediated phosphorylation of ERK1/2. Inhibits TGFB-induced epithelial-to-mesenchymal transition in lens epithelial cells. The polypeptide is Sprouty-related, EVH1 domain-containing protein 3 (SPRED3) (Homo sapiens (Human)).